A 293-amino-acid chain; its full sequence is MTLTERLSLYEKLARLDKPIGILLLLWPTLWAQWLASNGDPDWLILWIFVMGVVLMRSAGCVVNDYADRDFDPHVARTRDRPIAAGKVSPKEALLLAAGLSLLAFLLILPLNALVLKLSLIALFLAGSYPFTKRFFAIPQAYLGVAFGFGIPMSYAALWGEVPAEAWLLLAANVFWAIAYDTEYAMVDRADDLKIGIKTSAITFGRFDLTAIAFCYAATLALLAWVGALRDFSGWYYAGLAAAGAIAVYHLRLIRERDPRQCFRAFLHNTWFGAAVFGGIVLHFLLRSGSLFP.

8 consecutive transmembrane segments (helical) span residues 19–39 (PIGI…ASNG), 43–63 (WLIL…GCVV), 95–115 (LLAA…NALV), 135–155 (FFAI…PMSY), 158–178 (LWGE…FWAI), 209–229 (LTAI…VGAL), 231–251 (DFSG…VYHL), and 266–286 (FLHN…HFLL).

This sequence belongs to the UbiA prenyltransferase family. Mg(2+) is required as a cofactor.

It localises to the cell inner membrane. It catalyses the reaction all-trans-octaprenyl diphosphate + 4-hydroxybenzoate = 4-hydroxy-3-(all-trans-octaprenyl)benzoate + diphosphate. Its pathway is cofactor biosynthesis; ubiquinone biosynthesis. Functionally, catalyzes the prenylation of para-hydroxybenzoate (PHB) with an all-trans polyprenyl group. Mediates the second step in the final reaction sequence of ubiquinone-8 (UQ-8) biosynthesis, which is the condensation of the polyisoprenoid side chain with PHB, generating the first membrane-bound Q intermediate 3-octaprenyl-4-hydroxybenzoate. The chain is 4-hydroxybenzoate octaprenyltransferase from Thiobacillus denitrificans (strain ATCC 25259 / T1).